Consider the following 306-residue polypeptide: 2-phosphoglycerate kinase (306 aa).

Residues Met-1–Glu-90 enclose the ATP-cone domain.

Belongs to the 2-phosphoglycerate kinase family. It depends on a divalent metal cation as a cofactor.

The enzyme catalyses (2R)-2-phosphoglycerate + ATP = (2R)-2,3-bisphosphoglycerate + ADP + H(+). It participates in thermoadapter biosynthesis; cyclic 2,3-diphosphoglycerate biosynthesis; cyclic 2,3-diphosphoglycerate from 2-phospho-D-glycerate: step 1/2. Catalyzes the phosphorylation of 2-phosphoglycerate to 2,3-diphosphoglycerate. Involved in the biosynthesis of cyclic 2,3-bisphosphoglycerate, a thermoprotectant. In Methanothermobacter thermautotrophicus (strain ATCC 29096 / DSM 1053 / JCM 10044 / NBRC 100330 / Delta H) (Methanobacterium thermoautotrophicum), this protein is 2-phosphoglycerate kinase.